The chain runs to 519 residues: Glucose-1-phosphate adenylyltransferase large subunit 3, chloroplastic/amyloplastic (519 aa).

A chloroplast-targeting transit peptide spans 1 to 74 (MQFSSVFPLE…DAGPDTLHVR (74 aa)).

Belongs to the bacterial/plant glucose-1-phosphate adenylyltransferase family. In terms of assembly, heterotetramer composed of two small and two large subunits. In terms of tissue distribution, expressed in stems.

It localises to the plastid. It is found in the chloroplast. It carries out the reaction alpha-D-glucose 1-phosphate + ATP + H(+) = ADP-alpha-D-glucose + diphosphate. It functions in the pathway glycan biosynthesis; starch biosynthesis. Activated by 3'phosphoglycerate, inhibited by orthophosphate. Allosteric regulation. Functionally, involved in synthesis of starch. Catalyzes the synthesis of ADP-glucose, a molecule that serves as an activated glycosyl donor for alpha-1,4-glucan synthesis. Essential for starch synthesis in leaf chloroplasts. This Oryza sativa subsp. japonica (Rice) protein is Glucose-1-phosphate adenylyltransferase large subunit 3, chloroplastic/amyloplastic.